The sequence spans 130 residues: Small ribosomal subunit protein uS11 (130 aa).

This sequence belongs to the universal ribosomal protein uS11 family. In terms of assembly, part of the 30S ribosomal subunit. Interacts with proteins S7 and S18. Binds to IF-3.

In terms of biological role, located on the platform of the 30S subunit, it bridges several disparate RNA helices of the 16S rRNA. Forms part of the Shine-Dalgarno cleft in the 70S ribosome. This Prochlorococcus marinus (strain NATL1A) protein is Small ribosomal subunit protein uS11.